The following is a 31-amino-acid chain: Cycloviolin-A (31 aa).

Residues 1-31 (GVIPCGESCVFIPCISAAIGCSCKNKVCYRN) constitute a cross-link (cyclopeptide (Gly-Asn)). Disulfide bonds link Cys5/Cys21, Cys9/Cys23, and Cys14/Cys28.

Post-translationally, this is a cyclic peptide.

Its function is as follows. Probably participates in a plant defense mechanism. Has anti-HIV activity. This chain is Cycloviolin-A, found in Leonia cymosa (Sacha uba).